Consider the following 243-residue polypeptide: UPF0758 protein AM1_4368 (243 aa).

In terms of domain architecture, MPN spans 113 to 235 (VIDDPAVAAA…FTSLRQTTSL (123 aa)). His184, His186, and Asp197 together coordinate Zn(2+). Residues 184–197 (HNHPSGQTDPSPED) carry the JAMM motif motif.

This sequence belongs to the UPF0758 family.

The protein is UPF0758 protein AM1_4368 of Acaryochloris marina (strain MBIC 11017).